The following is a 211-amino-acid chain: Urease accessory protein UreG (211 aa).

11–18 (GPVGSGKT) serves as a coordination point for GTP.

This sequence belongs to the SIMIBI class G3E GTPase family. UreG subfamily. In terms of assembly, homodimer. UreD, UreF and UreG form a complex that acts as a GTP-hydrolysis-dependent molecular chaperone, activating the urease apoprotein by helping to assemble the nickel containing metallocenter of UreC. The UreE protein probably delivers the nickel.

It localises to the cytoplasm. In terms of biological role, facilitates the functional incorporation of the urease nickel metallocenter. This process requires GTP hydrolysis, probably effectuated by UreG. In Photorhabdus laumondii subsp. laumondii (strain DSM 15139 / CIP 105565 / TT01) (Photorhabdus luminescens subsp. laumondii), this protein is Urease accessory protein UreG.